Consider the following 907-residue polypeptide: NADH-quinone oxidoreductase subunit G (907 aa).

The region spanning 1 to 83 (MTIIFVDNEE…GMIVSTSDKI (83 aa)) is the 2Fe-2S ferredoxin-type domain. [2Fe-2S] cluster contacts are provided by Cys-34, Cys-45, Cys-48, and Cys-67. The 4Fe-4S His(Cys)3-ligated-type domain occupies 83–122 (ISRNFRKGIIELLMLNHPHDCPICEEGGSCHLQDMTVMAG). 12 residues coordinate [4Fe-4S] cluster: His-99, Cys-103, Cys-106, Cys-112, Cys-151, Cys-154, Cys-157, Cys-201, Cys-228, Cys-231, Cys-235, and Cys-263. The 57-residue stretch at 221–277 (MQYAPSICQHCCVGCNISVGEKYGKISRIENRYHNAINHYFLCDLGRFSYDYSNVDE) folds into the 4Fe-4S Mo/W bis-MGD-type domain.

This sequence belongs to the complex I 75 kDa subunit family. In terms of assembly, composed of 13 different subunits. Subunits NuoCD, E, F, and G constitute the peripheral sector of the complex. [2Fe-2S] cluster serves as cofactor. [4Fe-4S] cluster is required as a cofactor.

It catalyses the reaction a quinone + NADH + 5 H(+)(in) = a quinol + NAD(+) + 4 H(+)(out). Its function is as follows. NDH-1 shuttles electrons from NADH, via FMN and iron-sulfur (Fe-S) centers, to quinones in the respiratory chain. Couples the redox reaction to proton translocation (for every two electrons transferred, four hydrogen ions are translocated across the cytoplasmic membrane), and thus conserves the redox energy in a proton gradient. In Buchnera aphidicola subsp. Baizongia pistaciae (strain Bp), this protein is NADH-quinone oxidoreductase subunit G (nuoG).